The primary structure comprises 302 residues: GLABROUS1 enhancer-binding protein (302 aa).

Disordered regions lie at residues 1 to 55 (MVTP…MKKK) and 158 to 229 (GQGD…NDDD). Ser27 carries the phosphoserine modification. The segment covering 180–195 (RTNESGEEMLKEHEEE) has biased composition (basic and acidic residues). A compositionally biased stretch (polar residues) spans 208–217 (AKTTENGTSS). The interval 270–291 (LSDEWKALCVEETRFNIKKLRF) is non-canonical leucine-zipper.

Belongs to the GeBP family. Homo- and heterodimers. Interacts with GPL1, GPL2 and GPL3. Interacts with KIN10, KIN11 and FLZ4. Interacts with KIN10 and KIN11 via its N-terminal part. Interacts with GPL1 and GPL3 via its C-terminal part. In terms of tissue distribution, expressed in the apical meristem and young leaf primordia. Not detected in emerging or mature leaves. Detected in the vascular tissues of cotyledons and leaves, in hydathodes and at the base of flowers and siliques, but not in roots.

It localises to the nucleus. Its subcellular location is the nucleolus. Functionally, DNA-binding protein, which specifically recognizes the GL1 enhancer sequence. May be involved in leaf initiation. May play redundant roles with GPL1 and GPL2 in cytokinin responses by regulating the transcript levels of type-A ARR response genes. Involved in stress responses. Plays a repressive role in cell expansion by counteracting the positive role of CPR5 in this process, but does not regulate cell proliferation or endoreduplication. May play a role in plant defense. The chain is GLABROUS1 enhancer-binding protein from Arabidopsis thaliana (Mouse-ear cress).